Here is a 502-residue protein sequence, read N- to C-terminus: ATP synthase subunit alpha (502 aa).

Positions 115 to 135 (VDGLGPINTTNTRPIESPAPG) are disordered. 169–176 (GDRQTGKT) is an ATP binding site.

It belongs to the ATPase alpha/beta chains family. In terms of assembly, F-type ATPases have 2 components, CF(1) - the catalytic core - and CF(0) - the membrane proton channel. CF(1) has five subunits: alpha(3), beta(3), gamma(1), delta(1), epsilon(1). CF(0) has three main subunits: a(1), b(2) and c(9-12). The alpha and beta chains form an alternating ring which encloses part of the gamma chain. CF(1) is attached to CF(0) by a central stalk formed by the gamma and epsilon chains, while a peripheral stalk is formed by the delta and b chains.

Its subcellular location is the cell membrane. The enzyme catalyses ATP + H2O + 4 H(+)(in) = ADP + phosphate + 5 H(+)(out). Functionally, produces ATP from ADP in the presence of a proton gradient across the membrane. The alpha chain is a regulatory subunit. The protein is ATP synthase subunit alpha of Bacillus anthracis (strain A0248).